Reading from the N-terminus, the 729-residue chain is MSKFIEPSNEEIKLEKLYQDMGLSDKEYDKVVEILGREPNFTEVGIFSVMWSEHCSYKHSKPFLKQFPTTGEHVLMGPGEGAGVVDIGDNQAVVFKVESHNHPSAIEPYQGAATGVGGIIRDIVSIGARPINLLNSLRFGELTVKQNQRLLKGVVSGIGGYGNCIGIPTTAGEIEFDERYDGNPLVNAMCVGIIDHDMVQKGTAKGVGNSVIYVGLKTGRDGIHGATFASEELTEESESKRPSVQIGDPFVGKKLMEATLEAITFDELVGIQDMGAAGLTSSSSEMAAKGGSGLHLRLDQVPTREPGISPYEMMLSETQERMLLVVEKGTEQKFLDLFNKHELDSAVIGEVTDTDRFVLTYDDEVYADIPVQPLADEAPVYILEGEEKEYNTSKNDYSNIDVHDTFIKLLQHPTIASKHHLYEQYDQQVGANTIIKPGLQASVVRVEGTQKAIASTIDGEARYVFNQPYEGGKMVVAEAYRNLIAVGATPLAMTDCLNYGSPEKKEIYQQLIDSTKGMSEACKVLQTPVVSGNVSLYNETRGTSIFPTPVVGMVGLIEDVSYLKEFKPKAGDKIYLVGETRDDFGGSQLEKLLYGSVNHEFESIDLSDEVSKGKLIKQAIRNGIASHVQTVGKGGLLVTLAKISAHYDLGMQAQLDVTNAQLFSETQGRYIVVVKEGQTLDIDQAQEIGHLTHQQLFDISNSDVKIKENVSDIKQKWEGAIVQCLTTQD.

H54 is a catalytic residue. The ATP site is built by Y57 and K96. E98 is a binding site for Mg(2+). Substrate contacts are provided by residues 99–102 (SHNH) and R121. Residue H100 is the Proton acceptor of the active site. A Mg(2+)-binding site is contributed by D122. Q245 contacts substrate. D273 lines the Mg(2+) pocket. Residue 317-319 (ETQ) participates in substrate binding. ATP-binding residues include D495 and G532. N533 contacts Mg(2+). Residue S535 participates in substrate binding.

Belongs to the FGAMS family. In terms of assembly, monomer. Part of the FGAM synthase complex composed of 1 PurL, 1 PurQ and 2 PurS subunits.

It is found in the cytoplasm. It catalyses the reaction N(2)-formyl-N(1)-(5-phospho-beta-D-ribosyl)glycinamide + L-glutamine + ATP + H2O = 2-formamido-N(1)-(5-O-phospho-beta-D-ribosyl)acetamidine + L-glutamate + ADP + phosphate + H(+). It participates in purine metabolism; IMP biosynthesis via de novo pathway; 5-amino-1-(5-phospho-D-ribosyl)imidazole from N(2)-formyl-N(1)-(5-phospho-D-ribosyl)glycinamide: step 1/2. Functionally, part of the phosphoribosylformylglycinamidine synthase complex involved in the purines biosynthetic pathway. Catalyzes the ATP-dependent conversion of formylglycinamide ribonucleotide (FGAR) and glutamine to yield formylglycinamidine ribonucleotide (FGAM) and glutamate. The FGAM synthase complex is composed of three subunits. PurQ produces an ammonia molecule by converting glutamine to glutamate. PurL transfers the ammonia molecule to FGAR to form FGAM in an ATP-dependent manner. PurS interacts with PurQ and PurL and is thought to assist in the transfer of the ammonia molecule from PurQ to PurL. This chain is Phosphoribosylformylglycinamidine synthase subunit PurL, found in Staphylococcus epidermidis (strain ATCC 12228 / FDA PCI 1200).